The primary structure comprises 349 residues: 4-hydroxy-tetrahydrodipicolinate reductase 2, chloroplastic (349 aa).

The N-terminal 53 residues, 1–53 (MAANGLMAASSVFLHRPVHPHFSFSSRTNQMVPLGFKGRVSFIGNVKRCFPVV), are a transit peptide targeting the chloroplast. NAD(+) is bound by residues 81 to 86 (GCSGKM), 173 to 175 (GTT), and 196 to 199 (SPQM). Histidine 232 (proton donor/acceptor) is an active-site residue. Catalysis depends on lysine 236, which acts as the Proton donor. 241-242 (GT) contributes to the (S)-2,3,4,5-tetrahydrodipicolinate binding site.

The protein belongs to the DapB family.

The protein localises to the plastid. It is found in the chloroplast. It catalyses the reaction (S)-2,3,4,5-tetrahydrodipicolinate + NAD(+) + H2O = (2S,4S)-4-hydroxy-2,3,4,5-tetrahydrodipicolinate + NADH + H(+). The enzyme catalyses (S)-2,3,4,5-tetrahydrodipicolinate + NADP(+) + H2O = (2S,4S)-4-hydroxy-2,3,4,5-tetrahydrodipicolinate + NADPH + H(+). It participates in amino-acid biosynthesis; L-lysine biosynthesis via DAP pathway; (S)-tetrahydrodipicolinate from L-aspartate: step 4/4. Catalyzes the conversion of 4-hydroxy-tetrahydrodipicolinate (HTPA) to tetrahydrodipicolinate. The polypeptide is 4-hydroxy-tetrahydrodipicolinate reductase 2, chloroplastic (DAPB2) (Arabidopsis thaliana (Mouse-ear cress)).